The primary structure comprises 126 residues: Large ribosomal subunit protein bL12 (126 aa).

This sequence belongs to the bacterial ribosomal protein bL12 family. In terms of assembly, homodimer. Part of the ribosomal stalk of the 50S ribosomal subunit. Forms a multimeric L10(L12)X complex, where L10 forms an elongated spine to which 2 to 4 L12 dimers bind in a sequential fashion. Binds GTP-bound translation factors.

Functionally, forms part of the ribosomal stalk which helps the ribosome interact with GTP-bound translation factors. Is thus essential for accurate translation. The sequence is that of Large ribosomal subunit protein bL12 from Acidovorax sp. (strain JS42).